The sequence spans 378 residues: Queuine tRNA-ribosyltransferase (378 aa).

The active-site Proton acceptor is D91. Residues 91–95 (DSGGF), D145, Q189, and G216 contribute to the substrate site. The interval 247–253 (GVGKPED) is RNA binding. D266 functions as the Nucleophile in the catalytic mechanism. An RNA binding; important for wobble base 34 recognition region spans residues 271 to 275 (TRNAR). Zn(2+) is bound by residues C304, C306, C309, and H335.

The protein belongs to the queuine tRNA-ribosyltransferase family. In terms of assembly, homodimer. Within each dimer, one monomer is responsible for RNA recognition and catalysis, while the other monomer binds to the replacement base PreQ1. Zn(2+) is required as a cofactor.

It carries out the reaction 7-aminomethyl-7-carbaguanine + guanosine(34) in tRNA = 7-aminomethyl-7-carbaguanosine(34) in tRNA + guanine. It participates in tRNA modification; tRNA-queuosine biosynthesis. Its function is as follows. Catalyzes the base-exchange of a guanine (G) residue with the queuine precursor 7-aminomethyl-7-deazaguanine (PreQ1) at position 34 (anticodon wobble position) in tRNAs with GU(N) anticodons (tRNA-Asp, -Asn, -His and -Tyr). Catalysis occurs through a double-displacement mechanism. The nucleophile active site attacks the C1' of nucleotide 34 to detach the guanine base from the RNA, forming a covalent enzyme-RNA intermediate. The proton acceptor active site deprotonates the incoming PreQ1, allowing a nucleophilic attack on the C1' of the ribose to form the product. After dissociation, two additional enzymatic reactions on the tRNA convert PreQ1 to queuine (Q), resulting in the hypermodified nucleoside queuosine (7-(((4,5-cis-dihydroxy-2-cyclopenten-1-yl)amino)methyl)-7-deazaguanosine). This is Queuine tRNA-ribosyltransferase from Vibrio atlanticus (strain LGP32) (Vibrio splendidus (strain Mel32)).